We begin with the raw amino-acid sequence, 327 residues long: GMP reductase (327 aa).

Catalysis depends on C176, which acts as the Thioimidate intermediate. Residue 205 to 228 coordinates NADP(+); it reads IIADGGIRTHGDIAKSIRFGASMV.

It belongs to the IMPDH/GMPR family. GuaC type 2 subfamily.

The catalysed reaction is IMP + NH4(+) + NADP(+) = GMP + NADPH + 2 H(+). Functionally, catalyzes the irreversible NADPH-dependent deamination of GMP to IMP. It functions in the conversion of nucleobase, nucleoside and nucleotide derivatives of G to A nucleotides, and in maintaining the intracellular balance of A and G nucleotides. In Streptococcus pyogenes serotype M28 (strain MGAS6180), this protein is GMP reductase.